Reading from the N-terminus, the 205-residue chain is MRFVLPKGRLLRGSLEILRRAGYEIDEPGERRLIQRFNGNEVLLARAFDVPVYVEHGVDVGITGSDVVEERGSDVFVPLDLPFGKCRLSLAMPRESVTPPEDMDGYRIATKYERITRNYFSSLGVEVEVIKLSGSVELAPKVGIADAIVDIVETGTTLRANGLVEVDKVMDVSAQLLVNRISQKTKFDEINSLVLAIKEVVKDGA.

It belongs to the ATP phosphoribosyltransferase family. Short subfamily.

It localises to the cytoplasm. The enzyme catalyses 1-(5-phospho-beta-D-ribosyl)-ATP + diphosphate = 5-phospho-alpha-D-ribose 1-diphosphate + ATP. It functions in the pathway amino-acid biosynthesis; L-histidine biosynthesis; L-histidine from 5-phospho-alpha-D-ribose 1-diphosphate: step 1/9. Catalyzes the condensation of ATP and 5-phosphoribose 1-diphosphate to form N'-(5'-phosphoribosyl)-ATP (PR-ATP). Has a crucial role in the pathway because the rate of histidine biosynthesis seems to be controlled primarily by regulation of HisG enzymatic activity. The protein is ATP phosphoribosyltransferase of Thermococcus gammatolerans (strain DSM 15229 / JCM 11827 / EJ3).